Consider the following 555-residue polypeptide: Formate--tetrahydrofolate ligase (555 aa).

65 to 72 (TPAGEGKS) is a binding site for ATP.

The protein belongs to the formate--tetrahydrofolate ligase family.

The enzyme catalyses (6S)-5,6,7,8-tetrahydrofolate + formate + ATP = (6R)-10-formyltetrahydrofolate + ADP + phosphate. It functions in the pathway one-carbon metabolism; tetrahydrofolate interconversion. The polypeptide is Formate--tetrahydrofolate ligase (Staphylococcus carnosus (strain TM300)).